Reading from the N-terminus, the 338-residue chain is uncharacterized protein (338 aa).

This is an uncharacterized protein from Schizosaccharomyces pombe (strain 972 / ATCC 24843) (Fission yeast).